Here is a 315-residue protein sequence, read N- to C-terminus: Protein FRA10AC1 homolog (315 aa).

The residue at position 1 (methionine 1) is an N-acetylmethionine. The segment at 1 to 28 is disordered; that stretch reads MHGHGGYDSDFSDDEQGGGSSKKRKKTV. Phosphoserine occurs at positions 9 and 12. Lysine 36 is subject to N6-acetyllysine. Residues 225–235 show a composition bias toward basic residues; the sequence is KEIKSTKKRSK. Residues 225-308 form a disordered region; that stretch reads KEIKSTKKRS…EKSQEEEFDD (84 aa). A compositionally biased stretch (basic and acidic residues) spans 236-245; the sequence is TKTESDESPH. Residues serine 251 and serine 252 each carry the phosphoserine modification. Residues 257–279 are compositionally biased toward basic and acidic residues; it reads SQGKDEGHSSSKRSEDSRNRNAG. Phosphoserine is present on residues serine 283 and serine 285.

Interacts with ESS2.

It localises to the nucleus. Its function is as follows. May be involved in pre-mRNA splicing. This Rattus norvegicus (Rat) protein is Protein FRA10AC1 homolog (Fra10ac1).